A 429-amino-acid polypeptide reads, in one-letter code: Histidine--tRNA ligase (429 aa).

It belongs to the class-II aminoacyl-tRNA synthetase family. In terms of assembly, homodimer.

It localises to the cytoplasm. The enzyme catalyses tRNA(His) + L-histidine + ATP = L-histidyl-tRNA(His) + AMP + diphosphate + H(+). This Pseudomonas fluorescens (strain Pf0-1) protein is Histidine--tRNA ligase.